A 514-amino-acid polypeptide reads, in one-letter code: AAA-ATPase ASD, mitochondrial (514 aa).

Residues 7 to 24 (VWTNTGSALASLVFIYTI) traverse the membrane as a helical segment. 250–257 (GPPGTGKS) lines the ATP pocket. 2 disordered regions span residues 311–342 (GQRK…ENKG) and 467–514 (KEEA…TMKD). 2 stretches are compositionally biased toward basic and acidic residues: residues 331-342 (KQMKKDQGENKG) and 467-502 (KEEA…KEEK).

This sequence belongs to the AAA ATPase family. BCS1 subfamily. Mg(2+) is required as a cofactor. As to expression, expressed in seeds, specifically in the embryo.

It is found in the mitochondrion membrane. It carries out the reaction ATP + H2O = ADP + phosphate + H(+). In terms of biological role, required to regulate morphology and anatomy during seed maturation. The chain is AAA-ATPase ASD, mitochondrial (AATP1) from Arabidopsis thaliana (Mouse-ear cress).